The chain runs to 90 residues: uncharacterized protein (90 aa).

This is an uncharacterized protein from Saccharomyces cerevisiae (strain ATCC 204508 / S288c) (Baker's yeast).